The following is a 338-amino-acid chain: MKRLALALKQKKVASWKLEEVKELTELIKNSNTILIGSLEGFPADKLHEIRKKLRGKAIIKVTKNTLFKIAAKNAGINTEKLEQYLTGPNVFIFTKDNPFLTNMFFENYKLRRYAMPGDKAEEEVIIPAGDTGMPAGPILSVFGKLKVQTKVQDGKVHVVKDTVVAKPGDVIPTEALPILQKLGIMPVYVKLKIKVAYHEGLVIPAENLKLNLEGYRSNIAEAYRNAFTLAVEIAYPVPDVLKFTISKVFKNAIALASEIGYLTPESAQAVISKAVAKAYALATAISGKVDLGVQLPAAQQTQTQQSTAEEKKEEKKEEEKKGPSEEEIGSGLASLFG.

Residues 298-308 are compositionally biased toward low complexity; sequence AAQQTQTQQST. Positions 298–338 are disordered; the sequence is AAQQTQTQQSTAEEKKEEKKEEEKKGPSEEEIGSGLASLFG. Positions 309–325 are enriched in basic and acidic residues; sequence AEEKKEEKKEEEKKGPS.

It belongs to the universal ribosomal protein uL10 family. In terms of assembly, part of the 50S ribosomal subunit. Forms part of the ribosomal stalk which helps the ribosome interact with GTP-bound translation factors. Forms a heptameric L10(L12)2(L12)2(L12)2 complex, where L10 forms an elongated spine to which the L12 dimers bind in a sequential fashion.

Forms part of the ribosomal stalk, playing a central role in the interaction of the ribosome with GTP-bound translation factors. The polypeptide is Large ribosomal subunit protein uL10 (Saccharolobus islandicus (strain M.16.27) (Sulfolobus islandicus)).